We begin with the raw amino-acid sequence, 239 residues long: Sugar fermentation stimulation protein homolog (239 aa).

It belongs to the SfsA family.

The polypeptide is Sugar fermentation stimulation protein homolog (Caulobacter vibrioides (strain ATCC 19089 / CIP 103742 / CB 15) (Caulobacter crescentus)).